The following is a 551-amino-acid chain: Glucans biosynthesis protein D (551 aa).

The tat-type signal signal peptide spans 1 to 32 (MDRRRFIKGSMAMAAVCGTSGIASLFSQAAFA).

The protein belongs to the OpgD/OpgG family. Post-translationally, predicted to be exported by the Tat system. The position of the signal peptide cleavage has not been experimentally proven.

The protein resides in the periplasm. Its pathway is glycan metabolism; osmoregulated periplasmic glucan (OPG) biosynthesis. Its function is as follows. Probably involved in the control of the structural glucose backbone of osmoregulated periplasmic glucans (OPGs). In Shigella flexneri, this protein is Glucans biosynthesis protein D (mdoD).